An 876-amino-acid chain; its full sequence is Inter-alpha-trypsin inhibitor heavy chain H3 (876 aa).

Positions 1-18 are cleaved as a signal peptide; the sequence is MVALSHLGSALQLGSLWG. Residues 19–31 constitute a propeptide that is removed on maturation; sequence FPRSPFRLLGKRS. A VIT domain is found at 26–155; sequence LLGKRSLPEG…KVTFELTYEE (130 aa). N-linked (GlcNAc...) asparagine glycosylation occurs at Asn88. The 184-residue stretch at 281-464 folds into the VWFA domain; the sequence is NVAFVIDISG…LQLQGFYEEV (184 aa). N-linked (GlcNAc...) asparagine glycosylation occurs at Asn577. Asp637 carries the post-translational modification Aspartate 1-(chondroitin 4-sulfate)-ester. Positions 638–876 are excised as a propeptide; it reads PHFIIQVPEK…HTDYIVPNLF (239 aa).

Belongs to the ITIH family. As to quaternary structure, I-alpha-I plasma protease inhibitors are assembled from one or two heavy chains (HC) and one light chain, bikunin. Pre-alpha-inhibitor (P-alpha-I) is composed of ITIH3/HC3 and bikunin. In terms of processing, heavy chains are linked to bikunin via chondroitin 4-sulfate esterified to the alpha-carboxyl of the C-terminal aspartate after propeptide cleavage.

It localises to the secreted. May act as a carrier of hyaluronan in serum or as a binding protein between hyaluronan and other matrix protein, including those on cell surfaces in tissues to regulate the localization, synthesis and degradation of hyaluronan which are essential to cells undergoing biological processes. The polypeptide is Inter-alpha-trypsin inhibitor heavy chain H3 (ITIH3) (Pongo abelii (Sumatran orangutan)).